We begin with the raw amino-acid sequence, 547 residues long: Glucose-6-phosphate isomerase (547 aa).

Catalysis depends on E351, which acts as the Proton donor. Catalysis depends on residues H382 and K509.

This sequence belongs to the GPI family.

The protein localises to the cytoplasm. It catalyses the reaction alpha-D-glucose 6-phosphate = beta-D-fructose 6-phosphate. Its pathway is carbohydrate biosynthesis; gluconeogenesis. It functions in the pathway carbohydrate degradation; glycolysis; D-glyceraldehyde 3-phosphate and glycerone phosphate from D-glucose: step 2/4. Catalyzes the reversible isomerization of glucose-6-phosphate to fructose-6-phosphate. This is Glucose-6-phosphate isomerase from Coxiella burnetii (strain CbuG_Q212) (Coxiella burnetii (strain Q212)).